Here is a 505-residue protein sequence, read N- to C-terminus: Sodium/sialic acid symporter NanT (505 aa).

The next 5 helical transmembrane spans lie at 9 to 29 (LNYI…VYFA), 45 to 65 (IPGW…ITFM), 80 to 100 (IGQY…IPFF), 128 to 148 (FMLF…LALM), and 155 to 175 (PLMI…LGGI). A56 lines the Na(+) pocket. T58 serves as a coordination point for N-acetyl-alpha-neuraminate. L59 is a Na(+) binding site. The N-acetyl-alpha-neuraminate site is built by S60, T63, Q82, and R135. Position 182 (D182) interacts with Na(+). 4 helical membrane passes run 183–203 (VIQG…ICFN), 227–247 (FSWS…FFAS), 280–300 (LVAC…AYYT), and 318–338 (FYVI…AIFA). Positions 339, 342, 343, 345, and 346 each coordinate Na(+). 4 helical membrane-spanning segments follow: residues 378–398 (TLTV…IMSN), 406–426 (FNSL…LGIF), 435–455 (ALLG…ATDL), and 457–477 (FFFY…LTAP).

It belongs to the sodium:solute symporter (SSF) (TC 2.A.21) family.

The protein localises to the cell inner membrane. It catalyses the reaction N-acetyl-alpha-neuraminate(out) + 2 Na(+)(out) = N-acetyl-alpha-neuraminate(in) + 2 Na(+)(in). Functionally, symporter that uses the Na(+) gradient as the driving force for the uptake of the sialic acid N-acetylneuraminic acid (Neu5Ac). Might play a role in persistence after colonization. The protein is Sodium/sialic acid symporter NanT of Aliivibrio fischeri (strain ATCC 700601 / ES114) (Vibrio fischeri).